The chain runs to 462 residues: Glutamate--tRNA ligase 1 (462 aa).

Positions 8-18 match the 'HIGH' region motif; that stretch reads PSPTGYLHIGG. A 'KMSKS' region motif is present at residues 237–241; it reads KLSKR. Residue K240 coordinates ATP.

Belongs to the class-I aminoacyl-tRNA synthetase family. Glutamate--tRNA ligase type 1 subfamily. As to quaternary structure, monomer.

It localises to the cytoplasm. It carries out the reaction tRNA(Glu) + L-glutamate + ATP = L-glutamyl-tRNA(Glu) + AMP + diphosphate. Catalyzes the attachment of glutamate to tRNA(Glu) in a two-step reaction: glutamate is first activated by ATP to form Glu-AMP and then transferred to the acceptor end of tRNA(Glu). The sequence is that of Glutamate--tRNA ligase 1 from Campylobacter hominis (strain ATCC BAA-381 / DSM 21671 / CCUG 45161 / LMG 19568 / NCTC 13146 / CH001A).